A 190-amino-acid polypeptide reads, in one-letter code: Peptidyl-tRNA hydrolase (190 aa).

Tyr18 is a tRNA binding site. Residue His23 is the Proton acceptor of the active site. TRNA is bound by residues Phe65, Asn67, and Asn113.

The protein belongs to the PTH family. As to quaternary structure, monomer.

The protein resides in the cytoplasm. It catalyses the reaction an N-acyl-L-alpha-aminoacyl-tRNA + H2O = an N-acyl-L-amino acid + a tRNA + H(+). In terms of biological role, hydrolyzes ribosome-free peptidyl-tRNAs (with 1 or more amino acids incorporated), which drop off the ribosome during protein synthesis, or as a result of ribosome stalling. Functionally, catalyzes the release of premature peptidyl moieties from peptidyl-tRNA molecules trapped in stalled 50S ribosomal subunits, and thus maintains levels of free tRNAs and 50S ribosomes. In Akkermansia muciniphila (strain ATCC BAA-835 / DSM 22959 / JCM 33894 / BCRC 81048 / CCUG 64013 / CIP 107961 / Muc), this protein is Peptidyl-tRNA hydrolase.